We begin with the raw amino-acid sequence, 369 residues long: UDP-N-acetylglucosamine--N-acetylmuramyl-(pentapeptide) pyrophosphoryl-undecaprenol N-acetylglucosamine transferase (369 aa).

Residues 15–17, Asn-126, Arg-169, Ser-197, and Gln-299 contribute to the UDP-N-acetyl-alpha-D-glucosamine site; that span reads TGG.

The protein belongs to the glycosyltransferase 28 family. MurG subfamily.

Its subcellular location is the cell inner membrane. It carries out the reaction di-trans,octa-cis-undecaprenyl diphospho-N-acetyl-alpha-D-muramoyl-L-alanyl-D-glutamyl-meso-2,6-diaminopimeloyl-D-alanyl-D-alanine + UDP-N-acetyl-alpha-D-glucosamine = di-trans,octa-cis-undecaprenyl diphospho-[N-acetyl-alpha-D-glucosaminyl-(1-&gt;4)]-N-acetyl-alpha-D-muramoyl-L-alanyl-D-glutamyl-meso-2,6-diaminopimeloyl-D-alanyl-D-alanine + UDP + H(+). It functions in the pathway cell wall biogenesis; peptidoglycan biosynthesis. In terms of biological role, cell wall formation. Catalyzes the transfer of a GlcNAc subunit on undecaprenyl-pyrophosphoryl-MurNAc-pentapeptide (lipid intermediate I) to form undecaprenyl-pyrophosphoryl-MurNAc-(pentapeptide)GlcNAc (lipid intermediate II). The sequence is that of UDP-N-acetylglucosamine--N-acetylmuramyl-(pentapeptide) pyrophosphoryl-undecaprenol N-acetylglucosamine transferase from Methylorubrum extorquens (strain PA1) (Methylobacterium extorquens).